The primary structure comprises 351 residues: Ferredoxin--NADP reductase (351 aa).

The FAD site is built by Thr-14, Asp-33, Gln-41, Tyr-46, Ala-86, Phe-121, Asp-287, and Thr-328.

Belongs to the ferredoxin--NADP reductase type 2 family. In terms of assembly, homodimer. It depends on FAD as a cofactor.

It catalyses the reaction 2 reduced [2Fe-2S]-[ferredoxin] + NADP(+) + H(+) = 2 oxidized [2Fe-2S]-[ferredoxin] + NADPH. The sequence is that of Ferredoxin--NADP reductase from Flavobacterium psychrophilum (strain ATCC 49511 / DSM 21280 / CIP 103535 / JIP02/86).